A 344-amino-acid chain; its full sequence is MASGVGAAFEELPHDGTCDECEPDEAPGAEEVCRECGFCYCRRHAEAHRQKFLSHHLAEYVHGSQAWTPPADGEGAGKEEAEVKVEQEREIESEAGEESESEEESESEEESETEEESEDESDEESEEDSEEEMEDEQESEAEEDNQEEGESEAEGETEAESEFDPEIEMEAERVAKRKCPDHGLDLSTYCQEDRQLICVLCPVIGAHQGHQLSTLDEAFEELRSKDSGGLKAAMIELVERLKFKSSDPKVTRDQMKMFIQQEFKKVQKVIADEEQKALHLVDIQEAMATAHVTEILADIQSHMDRLMTQMAQAKEQLDTSNESAEPKAEGDEEGPSGASEEEDT.

2 disordered regions span residues 1–25 and 66–165; these read MASG…EPDE and AWTP…EFDP. The span at 75-92 shows a compositional bias: basic and acidic residues; sequence GAGKEEAEVKVEQEREIE. A compositionally biased stretch (acidic residues) spans 93 to 165; it reads SEAGEESESE…ETEAESEFDP (73 aa). A B box-type zinc finger spans residues 174–215; that stretch reads VAKRKCPDHGLDLSTYCQEDRQLICVLCPVIGAHQGHQLSTL. Residues Cys179, His182, Cys201, and His207 each contribute to the Zn(2+) site. Positions 290–325 form a coiled coil; that stretch reads AHVTEILADIQSHMDRLMTQMAQAKEQLDTSNESAE. The segment at 309–344 is disordered; that stretch reads QMAQAKEQLDTSNESAEPKAEGDEEGPSGASEEEDT. The span at 330 to 344 shows a compositional bias: acidic residues; the sequence is GDEEGPSGASEEEDT. Residues Ser336 and Ser339 each carry the phosphoserine modification.

Interacts (via coiled coil) with TRIM17 (via coiled coil). Highly expressed in testis.

May play a role in the process of differentiation and maturation of neuronal cells. May regulate the activity of TRIM17. Is a negative regulator of PAX6 expression. This is Tripartite motif-containing protein 44 (TRIM44) from Homo sapiens (Human).